A 317-amino-acid chain; its full sequence is CXXC-type zinc finger protein 5 (317 aa).

The span at 1–49 (MSSLSSGPQDTGGSSSSSSNGSSGSGPKAGVADKSAAVAAAAPASVADD) shows a compositional bias: low complexity. The segment at 1–96 (MSSLSSGPQD…GSGGGSMMGG (96 aa)) is disordered. Residues 83-94 (GGSGGSGGGSMM) show a composition bias toward gly residues. The CXXC-type zinc finger occupies 251–292 (GKKKRKRCGMCAPCRRRINCEQCSSCRNRKTGHQICKFRKCE). The Nuclear localization signal motif lies at 252–257 (KKKRKR). Zn(2+) is bound by residues cysteine 258, cysteine 261, cysteine 264, cysteine 270, cysteine 273, cysteine 276, cysteine 286, and cysteine 291.

In terms of assembly, interacts with DVL1. Interacts with RBPJ.

It localises to the nucleus. It is found in the cytoplasm. In terms of biological role, may indirectly participate in activation of the NF-kappa-B and MAPK pathways. Acts as a mediator of BMP4-mediated modulation of canonical Wnt signaling activity in neural stem cells. Required for DNA damage-induced ATM phosphorylation, p53 activation and cell cycle arrest. Involved in myelopoiesis. Binds to the oxygen responsive element of COX4I2 and represses its transcription under hypoxia conditions (4% oxygen), as well as normoxia conditions (20% oxygen). May repress COX4I2 transactivation induced by CHCHD2 and RBPJ. Binds preferentially to DNA containing cytidine-phosphate-guanosine (CpG) dinucleotides over CpH (H=A, T, and C), hemimethylated-CpG and hemimethylated-hydroxymethyl-CpG. This chain is CXXC-type zinc finger protein 5 (CXXC5), found in Bos taurus (Bovine).